The following is a 198-amino-acid chain: uncharacterized protein (198 aa).

The interval Glu-51–His-74 is disordered.

This is an uncharacterized protein from Homo sapiens (Human).